The primary structure comprises 390 residues: MSKDSPLIALVAGEISGDILGAGLINALKIHYPNARFIGVAGPQMIQAGCQTLFDMEELAVMGLAEVVKHLPRLLKRRKQVIQTMLQQQPDIFIGIDAPDFNLTIEQKLKAKGITTIHYVSPSVWAWRQDRIHKIKRATNLVLAFLPFEKAFYDRFNVACRFIGHTMADAIALKPNRTEACQILNIDENQRYLAILAGSRASEVDFLAEPFLKAALLLKQKYPDLQCLVPLVNQQRIQQFEQIKARVAPSLPVKILKGNARQAMIAADATLLASGTAALEAMLCKSPMVVGYKLKPTSYWLAKRLIKTKYISLPNLLADDMLVPELIQDECNPENLAWYLGNYLADDIDNKKQQNELKQRFTDLHKMIQCDADSKAAQAVIDLLANSDDQ.

The protein belongs to the LpxB family.

It catalyses the reaction a lipid X + a UDP-2-N,3-O-bis[(3R)-3-hydroxyacyl]-alpha-D-glucosamine = a lipid A disaccharide + UDP + H(+). It participates in bacterial outer membrane biogenesis; LPS lipid A biosynthesis. Condensation of UDP-2,3-diacylglucosamine and 2,3-diacylglucosamine-1-phosphate to form lipid A disaccharide, a precursor of lipid A, a phosphorylated glycolipid that anchors the lipopolysaccharide to the outer membrane of the cell. The sequence is that of Lipid-A-disaccharide synthase from Haemophilus ducreyi (strain 35000HP / ATCC 700724).